Here is a 112-residue protein sequence, read N- to C-terminus: Protein ECM19 (112 aa).

Residues 35–57 traverse the membrane as a helical segment; the sequence is NTLDMVTIGIACLVGVYTGTRFF. The interval 82–112 is disordered; the sequence is EDGNLLKVTPSLSSTPAAPPTPPTPPTPPQQ. Over residues 98–112 the composition is skewed to pro residues; sequence AAPPTPPTPPTPPQQ.

The protein resides in the mitochondrion membrane. Its function is as follows. May be involved in cell wall organization and biogenesis. This chain is Protein ECM19 (ECM19), found in Saccharomyces cerevisiae (strain ATCC 204508 / S288c) (Baker's yeast).